The sequence spans 367 residues: uncharacterized protein (367 aa).

The FAD-binding PCMH-type domain occupies Ile1–Val96.

The protein to M.tuberculosis Rv3790.

This is an uncharacterized protein from Streptomyces coelicolor.